The following is a 483-amino-acid chain: Arginine/agmatine antiporter (483 aa).

Transmembrane regions (helical) follow at residues 11–33 (ILGT…IFSL), 48–70 (LAWM…LSII), 90–112 (VGFT…YAVI), 127–149 (GGNT…YIVL), 156–178 (SFVN…LITA), 209–228 (TMLV…VISG), 241–263 (ILGF…GSLF), 293–315 (TGLL…EIPY), 335–357 (APSF…VYFS), 367–389 (ITGV…FSLS), 415–435 (LWLI…LLAL), and 458–477 (EILK…FLFS).

It belongs to the amino acid-polyamine-organocation (APC) superfamily. Basic amino acid/polyamine antiporter (APA) (TC 2.A.3.2) family.

Its subcellular location is the cell inner membrane. Its function is as follows. Catalyzes the exchange of L-arginine for agmatine. The arginine uptake by the bacterium in the macrophage may be a virulence factor against the host innate immune response. This chain is Arginine/agmatine antiporter (aaxC), found in Chlamydia trachomatis serovar L2 (strain ATCC VR-902B / DSM 19102 / 434/Bu).